A 101-amino-acid chain; its full sequence is Small ribosomal subunit protein uS14 (101 aa).

This sequence belongs to the universal ribosomal protein uS14 family. Part of the 30S ribosomal subunit. Contacts proteins S3 and S10.

Binds 16S rRNA, required for the assembly of 30S particles and may also be responsible for determining the conformation of the 16S rRNA at the A site. The protein is Small ribosomal subunit protein uS14 of Escherichia coli O139:H28 (strain E24377A / ETEC).